The primary structure comprises 346 residues: Quinolinate synthase (346 aa).

Residues His47 and Ser68 each coordinate iminosuccinate. [4Fe-4S] cluster is bound at residue Cys113. Residues 139–141 (YAN) and Ser156 contribute to the iminosuccinate site. [4Fe-4S] cluster is bound at residue Cys200. Residues 226–228 (HPE) and Thr243 each bind iminosuccinate. Cys297 is a [4Fe-4S] cluster binding site.

It belongs to the quinolinate synthase family. Type 1 subfamily. [4Fe-4S] cluster serves as cofactor.

Its subcellular location is the cytoplasm. It catalyses the reaction iminosuccinate + dihydroxyacetone phosphate = quinolinate + phosphate + 2 H2O + H(+). It functions in the pathway cofactor biosynthesis; NAD(+) biosynthesis; quinolinate from iminoaspartate: step 1/1. Catalyzes the condensation of iminoaspartate with dihydroxyacetone phosphate to form quinolinate. The sequence is that of Quinolinate synthase from Photorhabdus laumondii subsp. laumondii (strain DSM 15139 / CIP 105565 / TT01) (Photorhabdus luminescens subsp. laumondii).